The primary structure comprises 417 residues: Serine hydroxymethyltransferase 2 (417 aa).

Residues leucine 121 and 125 to 127 each bind (6S)-5,6,7,8-tetrahydrofolate; that span reads GHL. Lysine 230 carries the post-translational modification N6-(pyridoxal phosphate)lysine. A (6S)-5,6,7,8-tetrahydrofolate-binding site is contributed by 355-357; the sequence is SPF.

This sequence belongs to the SHMT family. Homodimer. Requires pyridoxal 5'-phosphate as cofactor.

Its subcellular location is the cytoplasm. The catalysed reaction is (6R)-5,10-methylene-5,6,7,8-tetrahydrofolate + glycine + H2O = (6S)-5,6,7,8-tetrahydrofolate + L-serine. Its pathway is one-carbon metabolism; tetrahydrofolate interconversion. The protein operates within amino-acid biosynthesis; glycine biosynthesis; glycine from L-serine: step 1/1. Its function is as follows. Catalyzes the reversible interconversion of serine and glycine with tetrahydrofolate (THF) serving as the one-carbon carrier. This reaction serves as the major source of one-carbon groups required for the biosynthesis of purines, thymidylate, methionine, and other important biomolecules. Also exhibits THF-independent aldolase activity toward beta-hydroxyamino acids, producing glycine and aldehydes, via a retro-aldol mechanism. This chain is Serine hydroxymethyltransferase 2, found in Pseudomonas syringae pv. syringae (strain B728a).